Reading from the N-terminus, the 239-residue chain is Beta-glucanase (239 aa).

The N-terminal stretch at 1–25 (MKRVLLILVTGLFMSLCGITSSVSA) is a signal peptide. The region spanning 26 to 239 (QTGGSFFEPF…HYDWMRYRKK (214 aa)) is the GH16 domain. A disulfide bridge connects residues C57 and C86. The active-site Nucleophile is the E134.

Belongs to the glycosyl hydrolase 16 family.

It catalyses the reaction Hydrolysis of (1-&gt;4)-beta-D-glucosidic linkages in beta-D-glucans containing (1-&gt;3)- and (1-&gt;4)-bonds.. The protein is Beta-glucanase (bglA) of Bacillus amyloliquefaciens (Bacillus velezensis).